Consider the following 129-residue polypeptide: Small ribosomal subunit protein uS11 (129 aa).

Belongs to the universal ribosomal protein uS11 family. As to quaternary structure, part of the 30S ribosomal subunit. Interacts with proteins S7 and S18. Binds to IF-3.

Its function is as follows. Located on the platform of the 30S subunit, it bridges several disparate RNA helices of the 16S rRNA. Forms part of the Shine-Dalgarno cleft in the 70S ribosome. This chain is Small ribosomal subunit protein uS11, found in Limosilactobacillus reuteri (strain DSM 20016) (Lactobacillus reuteri).